Consider the following 340-residue polypeptide: MSELDQLRQEAEQLKNQIRDARKACADATLSQITNNIDPVGRIQMRTRRTLRGHLAKIYAMHWGTDSRLLVSASQDGKLIIWDSYTTNKVHAIPLRSSWVMTCAYAPSGNYVACGGLDNICSIYNLKTREGNVRVSRELAGHTGYLSCCRFLDDNQIVTSSGDTTCALWDIETGQQTTTFTGHTGDVMSLSLAPDTRLFVSGACDASAKLWDVREGMCRQTFTGHESDINAICFFPNGNAFATGSDDATCRLFDLRADQELMTYSHDNIICGITSVSFSKSGRLLLAGYDDFNCNVWDALKADRAGVLAGHDNRVSCLGVTDDGMAVATGSWDSFLKIWN.

An N-acetylserine modification is found at S2. S2 is subject to Phosphoserine. 7 WD repeats span residues 46 to 94, 95 to 140, 141 to 181, 182 to 223, 224 to 267, 268 to 309, and 310 to 340; these read RTRR…HAIP, LRSS…RELA, GHTG…TTFT, GHTG…QTFT, GHES…YSHD, NIIC…GVLA, and GHDNRVSCLGVTDDGMAVATGSWDSFLKIWN. H266 bears the Phosphohistidine mark.

It belongs to the WD repeat G protein beta family. As to quaternary structure, g proteins are composed of 3 units, alpha, beta and gamma. The heterodimer formed by GNB1 and GNG2 interacts with ARHGEF5. The heterodimer formed by GNB1 and GNG2 interacts with GRK2. Forms a complex with GNAO1 and GNG3. Interacts with ARHGEF18 and RASD2. Forms complexes with TAS2R14 and G-proteins; these complexes play a role in the perception of bitterness. Component of the TAS2R14-GNAI1 complex, consisting of TAS2R14, GNAI1, GNB1 and GNG2. Component of the TAS2R14-GNAT3 complex, consisting of TAS2R14, GNAT3, GNB1 and GNG2. Component of the TAS2R14-GNAS2 complex, consisting of TAS2R14, GNAS2, GNB1 and GNG2. Phosphorylation at His-266 by NDKB contributes to G protein activation by increasing the high energetic phosphate transfer onto GDP.

Its function is as follows. Guanine nucleotide-binding proteins (G proteins) are involved as a modulator or transducer in various transmembrane signaling systems. The beta and gamma chains are required for the GTPase activity, for replacement of GDP by GTP, and for G protein-effector interaction. The protein is Guanine nucleotide-binding protein G(I)/G(S)/G(T) subunit beta-1 (GNB1) of Bos taurus (Bovine).